The sequence spans 428 residues: Elongation factor 1-alpha (428 aa).

The 221-residue stretch at Lys5 to Thr225 folds into the tr-type G domain. The G1 stretch occupies residues Gly14–Ser21. Gly14–Ser21 contacts GTP. Residue Ser21 coordinates Mg(2+). The tract at residues Gly70–Asp74 is G2. The G3 stretch occupies residues Asp91–Gly94. GTP contacts are provided by residues Asp91–His95 and Asn149–Asp152. The G4 stretch occupies residues Asn149–Asp152. Residues Ala189–Leu191 form a G5 region.

Belongs to the TRAFAC class translation factor GTPase superfamily. Classic translation factor GTPase family. EF-Tu/EF-1A subfamily.

It localises to the cytoplasm. It carries out the reaction GTP + H2O = GDP + phosphate + H(+). Its function is as follows. GTP hydrolase that promotes the GTP-dependent binding of aminoacyl-tRNA to the A-site of ribosomes during protein biosynthesis. The polypeptide is Elongation factor 1-alpha (Methanococcus maripaludis (strain C6 / ATCC BAA-1332)).